Consider the following 453-residue polypeptide: Growth/differentiation factor 9 (453 aa).

An N-terminal signal peptide occupies residues 1-25 (MALPNKFFLWFCCFAWLCFPISLDS). Residues 26-318 (QPSRGEAQIV…EGVRLSRHRR (293 aa)) constitute a propeptide that is removed on maturation. N-linked (GlcNAc...) asparagine glycosylation is found at N106, N163, N236, N255, and N269. The interval 281–300 (SLHPKRKPSQDPDQKRGLSA) is disordered. N337 is a glycosylation site (N-linked (GlcNAc...) asparagine). Intrachain disulfides connect C352–C418, C381–C450, and C385–C452.

Belongs to the TGF-beta family. As to quaternary structure, homodimer or heterodimer (Potential). But, in contrast to other members of this family, cannot be disulfide-linked. In terms of processing, phosphorylated; phosphorylation is critical for GDF9 function.

It localises to the secreted. Its function is as follows. Required for ovarian folliculogenesis. The chain is Growth/differentiation factor 9 (GDF9) from Bos taurus (Bovine).